A 1218-amino-acid chain; its full sequence is Coatomer subunit alpha-1 (1218 aa).

WD repeat units lie at residues 7–48, 49–88, 91–132, 133–172, 202–241, 246–285, 288–326, 363–404, and 450–489; these read TKSN…DRFD, EHDG…CLFT, GHLD…AVLT, GHNH…KKTV, GHDR…AWEV, GHMN…GIQT, REHD…PAFS, SLNQ…AGRA, and PLPI…GELQ. A disordered region spans residues 857-882; it reads NGGDGFDAEEGEANEEDGEEGGWDLE. A compositionally biased stretch (acidic residues) spans 862–882; that stretch reads FDAEEGEANEEDGEEGGWDLE.

In terms of assembly, oligomeric complex that consists of at least the alpha, beta, beta', gamma, delta, epsilon and zeta subunits.

It localises to the cytoplasm. It is found in the golgi apparatus membrane. Its subcellular location is the cytoplasmic vesicle. The protein resides in the COPI-coated vesicle membrane. In terms of biological role, the coatomer is a cytosolic protein complex that binds to dilysine motifs and reversibly associates with Golgi non-clathrin-coated vesicles, which further mediate biosynthetic protein transport from the ER, via the Golgi up to the trans Golgi network. Coatomer complex is required for budding from Golgi membranes, and is essential for the retrograde Golgi-to-ER transport of dilysine-tagged proteins. This is Coatomer subunit alpha-1 from Oryza sativa subsp. japonica (Rice).